Consider the following 305-residue polypeptide: Glycine--tRNA ligase alpha subunit (305 aa).

It belongs to the class-II aminoacyl-tRNA synthetase family. Tetramer of two alpha and two beta subunits.

Its subcellular location is the cytoplasm. The catalysed reaction is tRNA(Gly) + glycine + ATP = glycyl-tRNA(Gly) + AMP + diphosphate. The polypeptide is Glycine--tRNA ligase alpha subunit (Streptococcus pyogenes serotype M4 (strain MGAS10750)).